The primary structure comprises 316 residues: Putative mannose-6-phosphate isomerase YvyI (316 aa).

Positions 98, 116, and 173 each coordinate Zn(2+). Residue Arg-193 is part of the active site.

It belongs to the mannose-6-phosphate isomerase type 1 family. Zn(2+) serves as cofactor.

It catalyses the reaction D-mannose 6-phosphate = D-fructose 6-phosphate. The polypeptide is Putative mannose-6-phosphate isomerase YvyI (yvyI) (Bacillus subtilis (strain 168)).